The primary structure comprises 1392 residues: DNA-directed RNA polymerase subunit beta'' (1392 aa).

Cysteine 224, cysteine 295, cysteine 302, and cysteine 305 together coordinate Zn(2+).

Belongs to the RNA polymerase beta' chain family. RpoC2 subfamily. In plastids the minimal PEP RNA polymerase catalytic core is composed of four subunits: alpha, beta, beta', and beta''. When a (nuclear-encoded) sigma factor is associated with the core the holoenzyme is formed, which can initiate transcription. Zn(2+) serves as cofactor.

The protein resides in the plastid. Its subcellular location is the chloroplast. It catalyses the reaction RNA(n) + a ribonucleoside 5'-triphosphate = RNA(n+1) + diphosphate. Functionally, DNA-dependent RNA polymerase catalyzes the transcription of DNA into RNA using the four ribonucleoside triphosphates as substrates. This chain is DNA-directed RNA polymerase subunit beta'', found in Nicotiana tomentosiformis (Tobacco).